Reading from the N-terminus, the 267-residue chain is MSRISDRFASLKERGEKALVTFVTAGDPDLATTEKVVLELERAGADLVELGVPFSDPMADGPTIQLSSDRALASGTTLPAILELVSRLREKTQVPIVLMGYFNPIFAYGSERFAFDAAQAGVDALLVVDLPPEEAAELKGATDSCGLDLIFLLTPTSDSSRVAMVARQGSGFIYYVSVTGVTGARSAVADDLAARVTEVRGALELPLVVGFGISTPEQAGEVAQAADGVVVGSALVKYFEKYQGAELLEQLGGFVSALKQGVLKGSR.

Residues Glu-49 and Asp-60 each act as proton acceptor in the active site.

It belongs to the TrpA family. Tetramer of two alpha and two beta chains.

It catalyses the reaction (1S,2R)-1-C-(indol-3-yl)glycerol 3-phosphate + L-serine = D-glyceraldehyde 3-phosphate + L-tryptophan + H2O. It functions in the pathway amino-acid biosynthesis; L-tryptophan biosynthesis; L-tryptophan from chorismate: step 5/5. In terms of biological role, the alpha subunit is responsible for the aldol cleavage of indoleglycerol phosphate to indole and glyceraldehyde 3-phosphate. This Geobacter sp. (strain M21) protein is Tryptophan synthase alpha chain.